The following is a 642-amino-acid chain: Probable serine/threonine-protein kinase drkA (642 aa).

The N-terminal stretch at 1 to 23 (MKKLPFLIIIIYIFLILISISSS) is a signal peptide. Topologically, residues 24-322 (IDYNYNNDID…KPTISLLKKY (299 aa)) are extracellular. Over residues 106–128 (SENSGSGSNSNSNSKNTDSSTGP) the composition is skewed to low complexity. A disordered region spans residues 106 to 136 (SENSGSGSNSNSNSKNTDSSTGPTPSPISIN). N-linked (GlcNAc...) asparagine glycans are attached at residues asparagine 136, asparagine 140, asparagine 158, asparagine 244, and asparagine 271. The chain crosses the membrane as a helical span at residues 323–343 (LIIGFSIVGGLLIIGGCFLLI). The Cytoplasmic segment spans residues 344 to 642 (RNRYRSSGYY…SDLQYVRQQL (299 aa)). A Protein kinase domain is found at 374–627 (IKIGVRIGKG…EQCLERLESI (254 aa)). Residues 380 to 388 (IGKGNYGEV) and lysine 401 contribute to the ATP site. Aspartate 497 functions as the Proton acceptor in the catalytic mechanism.

Belongs to the protein kinase superfamily. TKL Ser/Thr protein kinase family.

The protein resides in the membrane. It carries out the reaction L-seryl-[protein] + ATP = O-phospho-L-seryl-[protein] + ADP + H(+). The enzyme catalyses L-threonyl-[protein] + ATP = O-phospho-L-threonyl-[protein] + ADP + H(+). The protein is Probable serine/threonine-protein kinase drkA (drkA) of Dictyostelium discoideum (Social amoeba).